The chain runs to 222 residues: Large ribosomal subunit protein uL4 (222 aa).

The interval 50–72 is disordered; the sequence is TRGRSEVSHSTRKPFRQKGTGNA.

It belongs to the universal ribosomal protein uL4 family. In terms of assembly, part of the 50S ribosomal subunit.

Functionally, one of the primary rRNA binding proteins, this protein initially binds near the 5'-end of the 23S rRNA. It is important during the early stages of 50S assembly. It makes multiple contacts with different domains of the 23S rRNA in the assembled 50S subunit and ribosome. Forms part of the polypeptide exit tunnel. The sequence is that of Large ribosomal subunit protein uL4 from Chlamydia muridarum (strain MoPn / Nigg).